The primary structure comprises 537 residues: Phosphoenolpyruvate carboxykinase (ATP) (537 aa).

The substrate site is built by R61, Y195, and K201. ATP contacts are provided by residues K201, H220, and 236–244 (GLSGTGKTT). Mn(2+) is bound by residues K201 and H220. D257 provides a ligand contact to Mn(2+). E285, R323, and T448 together coordinate ATP. A substrate-binding site is contributed by R323.

This sequence belongs to the phosphoenolpyruvate carboxykinase (ATP) family. Mn(2+) serves as cofactor.

It is found in the cytoplasm. It catalyses the reaction oxaloacetate + ATP = phosphoenolpyruvate + ADP + CO2. It functions in the pathway carbohydrate biosynthesis; gluconeogenesis. Functionally, involved in the gluconeogenesis. Catalyzes the conversion of oxaloacetate (OAA) to phosphoenolpyruvate (PEP) through direct phosphoryl transfer between the nucleoside triphosphate and OAA. In Rhodopseudomonas palustris (strain HaA2), this protein is Phosphoenolpyruvate carboxykinase (ATP).